We begin with the raw amino-acid sequence, 800 residues long: Protein SPT2 homolog (800 aa).

An important for interaction with DNA region spans residues 1–687; that stretch reads MDFHSVLRMA…PGHRPNMQPP (687 aa). A coiled-coil region spans residues 53–82; sequence QEIQNKEVEAKRKKEGLLAKRKELKHDRKA. 3 disordered regions span residues 70–173, 197–646, and 661–698; these read LAKR…PALN, KEER…MAKP, and VPKSINGHMNGMRSAVPPGHRPNMQPPGRPLPPITSSY. The span at 124 to 137 shows a compositional bias: acidic residues; it reads TEEDEEYMTEEELY. Over residues 155–164 the composition is skewed to low complexity; that stretch reads PQKVAKAAPG. Positions 196-224 form a coiled coil; sequence KKEERLRTAEELKELEFLERKAQKADRKD. Composition is skewed to basic and acidic residues over residues 197-226 and 249-259; these read KEERLRTAEELKELEFLERKAQKADRKDPM and HSVEKRSHENS. Polar residues predominate over residues 260-272; that stretch reads KSSSTEQNGTFRK. Positions 273 to 295 are enriched in basic and acidic residues; sequence SSSDNRSREEKSGSVFHTKDSKF. 5 stretches are compositionally biased toward low complexity: residues 328–360, 367–377, 390–424, 443–501, and 514–581; these read SGSTSLRPSSGGSSSVSGRPSGSSEKPGSSSGK, SSSARSSSGSG, GASGSGSARSVGESGSRSGKPTGASGSGLARSVGA, GVSG…SVSG, and GAPG…ASSS. Over residues 608–626 the composition is skewed to polar residues; that stretch reads NSVRHNTTSISVSARSSLG. Over residues 684–693 the composition is skewed to pro residues; sequence MQPPGRPLPP. The tract at residues 688–800 is important for interaction with histones; that stretch reads GRPLPPITSS…LKSAKKMKSR (113 aa). A coiled-coil region spans residues 756-800; the sequence is REQQKEEARSLRLGIQEDLEELRREEEELKQKAKQLKSAKKMKSR.

This sequence belongs to the SPT2 family. Interacts with histones. Interacts with a heterotetrameric complex formed by histone H3 and H4, especially when the histone tetramer is not bound to DNA.

It is found in the nucleus. The protein localises to the nucleolus. Its function is as follows. Histone chaperone that stabilizes pre-existing histone tetramers and regulates replication-independent histone exchange on chromatin. Required for normal chromatin refolding in the coding region of transcribed genes, and for the suppression of spurious transcription. Binds DNA and histones and promotes nucleosome assembly (in vitro). Facilitates formation of tetrameric histone complexes containing histone H3 and H4. Modulates RNA polymerase 1-mediated transcription. Binds DNA, with a preference for branched DNA species, such as Y-form DNA and Holliday junction DNA. This Xenopus laevis (African clawed frog) protein is Protein SPT2 homolog (spty2d1).